A 267-amino-acid chain; its full sequence is 3-deoxy-manno-octulosonate cytidylyltransferase 2 (267 aa).

This sequence belongs to the KdsB family.

It is found in the cytoplasm. The enzyme catalyses 3-deoxy-alpha-D-manno-oct-2-ulosonate + CTP = CMP-3-deoxy-beta-D-manno-octulosonate + diphosphate. It participates in nucleotide-sugar biosynthesis; CMP-3-deoxy-D-manno-octulosonate biosynthesis; CMP-3-deoxy-D-manno-octulosonate from 3-deoxy-D-manno-octulosonate and CTP: step 1/1. Its pathway is bacterial outer membrane biogenesis; lipopolysaccharide biosynthesis. In terms of biological role, activates KDO (a required 8-carbon sugar) for incorporation into bacterial lipopolysaccharide in Gram-negative bacteria. This chain is 3-deoxy-manno-octulosonate cytidylyltransferase 2, found in Burkholderia ambifaria (strain MC40-6).